A 504-amino-acid polypeptide reads, in one-letter code: MAMENPFEGKEIWFGVGSQDLYGEEALRQVAQQTGEMVDFLNATGKIPAKIVLKPTLKSSDGVKAFMTEASANPNVIGVITWCHTFSPAKMWIRGLEVLTKPLLQLATQHHKEIPWETIDMDFMNLNQAAHGDREFGYIVSRLGIPRKIVVGHYTDPEVAEKVGTWARACAGWDASQNMKVMRWGDNMRNVAVTEGDKTEAERVFGASINTWAVNDLVAAYEKVKDSQVKDLIEDYKAKYDVAPELLDSRYDELFIAAKEEAAMVNMMRENGCTAGVDNFEDLGTLPQLPGVGPQRFPSEYGWGFSAEGDWKTSVLVRIGAVMGYGLEGGASLMEDYSYNFVPGNEFDMGSHMLEVSPSIGTIAKPKLAIYPLGIGGKSDPVRLVFSGKPADAVVVSMADERERFRLLMDEVTIVEPQGSLKNLPCARAVWKPKPDLKTAVQCWITAGGSHHTCMTTSVGREAWEDFARIAGVELAVIDENTNARQFEKELELSEMYHRLNNRH.

Mn(2+) contacts are provided by Glu-308, Glu-335, His-352, and His-452.

This sequence belongs to the arabinose isomerase family. It depends on Mn(2+) as a cofactor.

It carries out the reaction beta-L-arabinopyranose = L-ribulose. It participates in carbohydrate degradation; L-arabinose degradation via L-ribulose; D-xylulose 5-phosphate from L-arabinose (bacterial route): step 1/3. Catalyzes the conversion of L-arabinose to L-ribulose. This Bifidobacterium adolescentis (strain ATCC 15703 / DSM 20083 / NCTC 11814 / E194a) protein is L-arabinose isomerase.